A 123-amino-acid polypeptide reads, in one-letter code: Potassium voltage-gated channel subfamily E member 2 (123 aa).

Asn-6 and Asn-29 each carry an N-linked (GlcNAc...) asparagine glycan. The chain crosses the membrane as a helical span at residues 49 to 69 (VILYLMVMIGMFSFIIVAILV). The Cytoplasmic segment spans residues 70–123 (STVKSKRREHSNDPYHQYIVEDWQEKYKSQILNLEESKATIHENIGAAGFKMSP).

It belongs to the potassium channel KCNE family. Interacts with KCNB1. Associates with KCNH2/ERG1. May associate with KCNQ2 and KCNQ3. Associates with HCN1 and probably HCN2. Heteromultimer with KCNC2. Interacts with KCNC2. Interacts with KCNQ1; forms a heterooligomer complex that targets to the membrane raft and leading to currents with an apparently instantaneous activation, a rapid deactivation process and a linear current-voltage relationship and decreases the amplitude of the outward current. In terms of tissue distribution, highly expressed in brain, heart, skeletal muscle, pancreas, placenta, kidney, colon and thymus. A small but significant expression is found in liver, ovary, testis, prostate, small intestine and leukocytes. Very low expression, nearly undetectable, in lung and spleen.

It localises to the cell membrane. The protein localises to the apical cell membrane. Its function is as follows. Ancillary protein that functions as a regulatory subunit of the voltage-gated potassium (Kv) channel complex composed of pore-forming and potassium-conducting alpha subunits and of regulatory beta subunits. KCNE2 beta subunit modulates the gating kinetics and enhances stability of the channel complex. Alters the gating of the delayed rectifier Kv channel containing KCNB1 alpha subunit. Associates with KCNH2/HERG alpha subunit Kv channel to form the rapidly activating component of the delayed rectifying potassium current (IKr) in heart. May associate with KCNQ2 and/or KCNQ3 alpha subunits to modulate the native M-type current. May associate with HCN1 and HCN2 channel subunits to increase potassium current. Forms a heterooligomer complex with KCNQ1/KVLQT1 alpha subunits which leads to currents with an apparently instantaneous activation, a rapid deactivation process and a linear current-voltage relationship and decreases the amplitude of the outward current. KCNQ1-KCNE2 channel associates with Na(+)-coupled myo-inositol symporter in the apical membrane of choroid plexus epithelium and regulates the myo-inositol gradient between blood and cerebrospinal fluid with an impact on neuron excitability. This Homo sapiens (Human) protein is Potassium voltage-gated channel subfamily E member 2.